Here is a 313-residue protein sequence, read N- to C-terminus: Dimethyladenosine transferase (313 aa).

S-adenosyl-L-methionine is bound by residues His-37, Leu-39, Gly-64, Glu-85, Asp-113, and Asn-128.

It belongs to the class I-like SAM-binding methyltransferase superfamily. rRNA adenine N(6)-methyltransferase family. In terms of assembly, part of the small subunit (SSU) processome, composed of more than 70 proteins and the RNA chaperone small nucleolar RNA (snoRNA) U3.

It is found in the nucleus. Its subcellular location is the nucleoplasm. The protein localises to the nucleolus. It catalyses the reaction adenosine(1779)/adenosine(1780) in 18S rRNA + 4 S-adenosyl-L-methionine = N(6)-dimethyladenosine(1779)/N(6)-dimethyladenosine(1780) in 18S rRNA + 4 S-adenosyl-L-homocysteine + 4 H(+). In terms of biological role, specifically dimethylates two adjacent adenosines in the loop of a conserved hairpin near the 3'-end of 18S rRNA in the 40S particle. Involved in the pre-rRNA processing steps leading to small-subunit rRNA production independently of its RNA-modifying catalytic activity. Part of the small subunit (SSU) processome, first precursor of the small eukaryotic ribosomal subunit. During the assembly of the SSU processome in the nucleolus, many ribosome biogenesis factors, an RNA chaperone and ribosomal proteins associate with the nascent pre-rRNA and work in concert to generate RNA folding, modifications, rearrangements and cleavage as well as targeted degradation of pre-ribosomal RNA by the RNA exosome. In Mus musculus (Mouse), this protein is Dimethyladenosine transferase (Dimt1).